A 1641-amino-acid polypeptide reads, in one-letter code: Alpha-2-macroglobulin (1641 aa).

Residues methionine 1–glycine 31 form the signal peptide. The N-palmitoyl cysteine moiety is linked to residue cysteine 32. A lipid anchor (S-diacylglycerol cysteine) is attached at cysteine 32. The segment at residues cysteine 1166 to glutamine 1169 is a cross-link (isoglutamyl cysteine thioester (Cys-Gln)).

The protein belongs to the protease inhibitor I39 (alpha-2-macroglobulin) family. Bacterial alpha-2-macroglobulin subfamily.

It localises to the cell membrane. Its function is as follows. Protects the bacterial cell from host peptidases. This Xylella fastidiosa (strain 9a5c) protein is Alpha-2-macroglobulin.